The sequence spans 366 residues: MREETPEQPAPLRSGYTTGSCATATSLAAARLLLGGTISDAVQIVLPKGQQVLMRLEFCRAWENGAEAGTLKDAGDDPDVTHGALVFARVRLGAEPGVRFHAGPGVGTVTRPGLTLAVGEPAINPVPRQMIERHLAQLAAERGYAGGFEVAIGVEGGAELALKTMNPRLGILGGLSILGTSGIVRPFSCSAYIASIHQGIDVARANGVRHIAACTGNASEDAMRRRYGLPEIALIEMGDFAGAVLKHLRKAPVEKLSLCGGFGKISKLAGGHLDLHSRHSSIDLPQLAGWAAALGASTALQDSMRAANTSQQALAQAHAEGVALGDAVCAHALRFARGIVPTEVALEVFAIDRQGNLVGQACEERR.

It belongs to the CbiD family.

The catalysed reaction is Co-precorrin-5B + S-adenosyl-L-methionine = Co-precorrin-6A + S-adenosyl-L-homocysteine. It participates in cofactor biosynthesis; adenosylcobalamin biosynthesis; cob(II)yrinate a,c-diamide from sirohydrochlorin (anaerobic route): step 6/10. Functionally, catalyzes the methylation of C-1 in cobalt-precorrin-5B to form cobalt-precorrin-6A. The protein is Cobalt-precorrin-5B C(1)-methyltransferase of Pseudomonas aeruginosa (strain UCBPP-PA14).